Reading from the N-terminus, the 163-residue chain is NADH-quinone oxidoreductase subunit I (163 aa).

2 4Fe-4S ferredoxin-type domains span residues 54 to 84 (LRRY…IESD) and 94 to 123 (TRYD…ETHI). Residues Cys-64, Cys-67, Cys-70, Cys-74, Cys-103, Cys-106, Cys-109, and Cys-113 each coordinate [4Fe-4S] cluster.

Belongs to the complex I 23 kDa subunit family. NDH-1 is composed of 14 different subunits. Subunits NuoA, H, J, K, L, M, N constitute the membrane sector of the complex. [4Fe-4S] cluster serves as cofactor.

The protein localises to the cell inner membrane. It carries out the reaction a quinone + NADH + 5 H(+)(in) = a quinol + NAD(+) + 4 H(+)(out). Functionally, NDH-1 shuttles electrons from NADH, via FMN and iron-sulfur (Fe-S) centers, to quinones in the respiratory chain. The immediate electron acceptor for the enzyme in this species is believed to be ubiquinone. Couples the redox reaction to proton translocation (for every two electrons transferred, four hydrogen ions are translocated across the cytoplasmic membrane), and thus conserves the redox energy in a proton gradient. The protein is NADH-quinone oxidoreductase subunit I of Ralstonia nicotianae (strain ATCC BAA-1114 / GMI1000) (Ralstonia solanacearum).